The primary structure comprises 102 residues: Iron-sulfur cluster assembly protein CyaY (102 aa).

Belongs to the frataxin family.

Involved in iron-sulfur (Fe-S) cluster assembly. May act as a regulator of Fe-S biogenesis. The protein is Iron-sulfur cluster assembly protein CyaY of Pasteurella multocida (strain Pm70).